A 465-amino-acid chain; its full sequence is Argininosuccinate lyase (465 aa).

It belongs to the lyase 1 family. Argininosuccinate lyase subfamily.

It localises to the cytoplasm. The catalysed reaction is 2-(N(omega)-L-arginino)succinate = fumarate + L-arginine. It participates in amino-acid biosynthesis; L-arginine biosynthesis; L-arginine from L-ornithine and carbamoyl phosphate: step 3/3. This chain is Argininosuccinate lyase, found in Clostridium botulinum (strain Alaska E43 / Type E3).